The chain runs to 947 residues: Serine-aspartate repeat-containing protein C (947 aa).

An N-terminal signal peptide occupies residues 1-50 (MNNKKTATNRKGMIPNRLNKFSIRKYSVGTASILVGTTLIFGLSGHEAKA). A YSIRK-G/S signaling motif motif is present at residues 21-32 (FSIRKYSVGTAS). A disordered region spans residues 51 to 164 (AEHTNGELNQ…STTPKTTTIK (114 aa)). The tract at residues 51 to 495 (AEHTNGELNQ…GSSTANGDQK (445 aa)) is ligand binding A region. The span at 56 to 71 (GELNQSKNETTAPSEN) shows a compositional bias: polar residues. Over residues 72–83 (KTTKKVDSRQLK) the composition is skewed to basic and acidic residues. Polar residues predominate over residues 84–155 (DNTQTATADQ…SNLTQAKDVS (72 aa)). CNA-B domains lie at 496-606 (KYNL…YKTP) and 607-717 (KYSL…EEET). The segment at 678-927 (TQTGTNTTED…NNSNNGTLFG (250 aa)) is disordered. Acidic residues-rich tracts occupy residues 685 to 695 (TEDDKDADGGE) and 712 to 886 (YYEE…DSDS). Residues 910 to 914 (LPETG) carry the LPXTG sorting signal motif. Positions 912–927 (ETGSENNNSNNGTLFG) are enriched in low complexity. The residue at position 913 (Thr913) is a Pentaglycyl murein peptidoglycan amidated threonine. Positions 914–947 (GSENNNSNNGTLFGGLFAALGSLLLFGRRKKQNK) are cleaved as a propeptide — removed by sortase.

It belongs to the serine-aspartate repeat-containing protein (SDr) family. As to quaternary structure, homodimerizes; via N2-Domain. Interacts with host NRXN1; this interaction mediates bacterial attachment to host cells.

It localises to the secreted. The protein resides in the cell wall. Functionally, cell surface-associated calcium-binding protein which plays an important role in adhesion and pathogenesis. Mediates interactions with components of the extracellular matrix such as host NRXN1 to promote bacterial adhesion. The sequence is that of Serine-aspartate repeat-containing protein C (sdrC) from Staphylococcus aureus (strain Newman).